The sequence spans 287 residues: Orotidine 5'-phosphate decarboxylase (287 aa).

K97 functions as the Proton donor in the catalytic mechanism.

The protein belongs to the OMP decarboxylase family. Type 2 subfamily.

It catalyses the reaction orotidine 5'-phosphate + H(+) = UMP + CO2. Its pathway is pyrimidine metabolism; UMP biosynthesis via de novo pathway; UMP from orotate: step 2/2. The protein is Orotidine 5'-phosphate decarboxylase of Clostridium perfringens (strain ATCC 13124 / DSM 756 / JCM 1290 / NCIMB 6125 / NCTC 8237 / Type A).